A 2009-amino-acid polypeptide reads, in one-letter code: Protein Daple (2009 aa).

Positions 11–131 (LFLQSPLVTW…KVLLLVLGCA (121 aa)) constitute a Calponin-homology (CH) domain. The tract at residues 221–251 (QTQQPPSPGKFSSPDSTPSPTSSLSSEDKQH) is disordered. Ser-227 and Ser-239 each carry phosphoserine. The segment covering 232 to 245 (SSPDSTPSPTSSLS) has biased composition (low complexity). Coiled coils occupy residues 247–425 (EDKQ…QKQS) and 456–1008 (ELNE…TQEG). A Phosphoserine modification is found at Ser-486. The segment at 1002-1036 (LRQTQEGGDKAQNALKRPPGKVTSHQEKEAWEPSH) is disordered. The span at 1025–1036 (SHQEKEAWEPSH) shows a compositional bias: basic and acidic residues. Residues 1190–1384 (HRNLELEHKE…LEEKIMDQYK (195 aa)) adopt a coiled-coil conformation. Residues 1410 to 1419 (KEGSRERLKS) are compositionally biased toward basic and acidic residues. Disordered stretches follow at residues 1410–1716 (KEGS…GAKM) and 1757–1787 (GMPSRQVQPPQSLSLGRPRQTTMTQNCHMPV). Low complexity predominate over residues 1430-1439 (PSDPASPSPS). The residue at position 1435 (Ser-1435) is a Phosphoserine. Polar residues predominate over residues 1440–1449 (QALRSQTENP). Composition is skewed to low complexity over residues 1510-1524 (TFSTSATTAALSSST) and 1562-1581 (NSLESSRNASSNSSPLSLKG). Ser-1592 carries the phosphoserine modification. The short motif at 1652–1683 (HSASPSSEMVTLEEFLEESNRGGSPTHDTPSC) is the GBA element. The span at 1681–1697 (PSCRDDLLSDYFRKAHD) shows a compositional bias: basic and acidic residues. Over residues 1761-1783 (RQVQPPQSLSLGRPRQTTMTQNC) the composition is skewed to polar residues. Phosphoserine is present on Ser-1798. Positions 1808–2009 (SGPEACRPES…QTVWYEYGCV (202 aa)) are disordered. Positions 1866-1883 (RPLDTRRFSLAPPKEERL) are enriched in basic and acidic residues. The span at 1898 to 1911 (GCSSGSNPQIQHFS) shows a compositional bias: polar residues. A compositionally biased stretch (gly residues) spans 1943-1954 (TSEGDGGPGHGY). The span at 1981 to 1991 (SQGSSSKSTPA) shows a compositional bias: polar residues. The PDZ-binding motif lies at 2006 to 2009 (YGCV). The segment at 2007–2009 (GCV) is DVL1-binding.

This sequence belongs to the CCDC88 family. In terms of assembly, homooligomer. Interacts with DVL1 (via PDZ domain); dissociates following initiation of non-canonical Wnt signaling. Interacts (via C-terminus) with ligand-activated Wnt receptor FZD7; competes with DVL1 for binding to FZD7 and displaces DVL1 from ligand-activated FZD7. Interacts (via GBA motif) with guanine nucleotide-binding protein G(i) alpha subunits GNAI1, GNAI2 and GNAI3 (inactive GDP-bound form); interacts with higher affinity with GNAI1 and GNAI3 than with GNAI2 and interaction leads to G(i) alpha subunit activation. Does not interact with GNAO1.

It localises to the cytoplasm. Its subcellular location is the cell junction. Required for activation of guanine nucleotide-binding proteins (G-proteins) during non-canonical Wnt signaling. Binds to ligand-activated Wnt receptor FZD7, displacing DVL1 from the FZD7 receptor and leading to inhibition of canonical Wnt signaling. Acts as a non-receptor guanine nucleotide exchange factor by also binding to guanine nucleotide-binding protein G(i) alpha (Gi-alpha) subunits, leading to their activation. Binding to Gi-alpha subunits displaces the beta and gamma subunits from the heterotrimeric G-protein complex, triggering non-canonical Wnt responses such as activation of RAC1 and PI3K-AKT signaling. Promotes apical constriction of cells via ARHGEF18. The chain is Protein Daple (Ccdc88c) from Mus musculus (Mouse).